The primary structure comprises 275 residues: NH(3)-dependent NAD(+) synthetase (275 aa).

47-54 is a binding site for ATP; that stretch reads GMSGGQDS. Residue D53 participates in Mg(2+) binding. R141 is a binding site for deamido-NAD(+). T161 is an ATP binding site. E166 provides a ligand contact to Mg(2+). Deamido-NAD(+) contacts are provided by K174 and D181. Positions 190 and 212 each coordinate ATP. 261–262 contributes to the deamido-NAD(+) binding site; sequence HK.

Belongs to the NAD synthetase family. Homodimer.

The catalysed reaction is deamido-NAD(+) + NH4(+) + ATP = AMP + diphosphate + NAD(+) + H(+). The protein operates within cofactor biosynthesis; NAD(+) biosynthesis; NAD(+) from deamido-NAD(+) (ammonia route): step 1/1. Catalyzes the ATP-dependent amidation of deamido-NAD to form NAD. Uses ammonia as a nitrogen source. This chain is NH(3)-dependent NAD(+) synthetase, found in Oceanobacillus iheyensis (strain DSM 14371 / CIP 107618 / JCM 11309 / KCTC 3954 / HTE831).